We begin with the raw amino-acid sequence, 281 residues long: Pantothenate synthetase (281 aa).

30-37 (MGNLHQGH) contacts ATP. The active-site Proton donor is the H37. Q61 serves as a coordination point for (R)-pantoate. Q61 provides a ligand contact to beta-alanine. Residue 149–152 (GNKD) participates in ATP binding. Q155 contacts (R)-pantoate. Residues I178 and 186–189 (MSSR) contribute to the ATP site.

This sequence belongs to the pantothenate synthetase family. As to quaternary structure, homodimer.

Its subcellular location is the cytoplasm. The enzyme catalyses (R)-pantoate + beta-alanine + ATP = (R)-pantothenate + AMP + diphosphate + H(+). The protein operates within cofactor biosynthesis; (R)-pantothenate biosynthesis; (R)-pantothenate from (R)-pantoate and beta-alanine: step 1/1. Its function is as follows. Catalyzes the condensation of pantoate with beta-alanine in an ATP-dependent reaction via a pantoyl-adenylate intermediate. The chain is Pantothenate synthetase from Shewanella baltica (strain OS195).